A 761-amino-acid chain; its full sequence is Probable ATP-dependent RNA helicase DDX20 (761 aa).

Residues 26–54 (VEFSSLLLSKPVLEGLSASGFQRPSPIQL) carry the Q motif motif. Residues Arg-48, Gln-53, 70–77 (AKSGTGKT), and 73–78 (GTGKTC) contribute to the ATP site. The region spanning 57-231 (IPLGRCGLDL…SRYMREPTFV (175 aa)) is the Helicase ATP-binding domain. The DEAD box motif lies at 175 to 178 (DEAD). Residues 266–415 (SLLELFSKIP…PIPPGIMEEA (150 aa)) form the Helicase C-terminal domain. Disordered stretches follow at residues 428–525 (PKIP…KSHT) and 570–720 (HDAH…EAGQ). Positions 443–456 (KSEQMKSKPSRESH) are enriched in basic and acidic residues. Residues 498-512 (QHDSTITQKQQNNTL) are compositionally biased toward polar residues. 2 stretches are compositionally biased toward low complexity: residues 600-613 (SELS…SESS) and 623-635 (ESSS…STLE). A compositionally biased stretch (polar residues) spans 655 to 679 (TLPSTRVPQQATRSKQKPCQPQSQD). Positions 683 to 707 (HHNLPHKHRTASKSSRRPTGPKRRT) are enriched in basic residues.

This sequence belongs to the DEAD box helicase family. DDX20 subfamily. As to quaternary structure, part of the core SMN complex.

It is found in the cytoplasm. Its subcellular location is the nucleus. The enzyme catalyses ATP + H2O = ADP + phosphate + H(+). The catalysed reaction is a ribonucleoside 5'-triphosphate + H2O = a ribonucleoside 5'-diphosphate + phosphate + H(+). Its function is as follows. The SMN complex catalyzes the assembly of small nuclear ribonucleoproteins (snRNPs), the building blocks of the spliceosome, and thereby plays an important role in the splicing of cellular pre-mRNAs. Most spliceosomal snRNPs contain a common set of Sm proteins SNRPB, SNRPD1, SNRPD2, SNRPD3, SNRPE, SNRPF and SNRPG that assemble in a heptameric protein ring on the Sm site of the small nuclear RNA to form the core snRNP (Sm core). In the cytosol, the Sm proteins SNRPD1, SNRPD2, SNRPE, SNRPF and SNRPG are trapped in an inactive 6S pICln-Sm complex by the chaperone CLNS1A that controls the assembly of the core snRNP. To assemble core snRNPs, the SMN complex accepts the trapped 5Sm proteins from CLNS1A forming an intermediate. Binding of snRNA inside 5Sm triggers eviction of the SMN complex, thereby allowing binding of SNRPD3 and SNRPB to complete assembly of the core snRNP. May also play a role in the metabolism of small nucleolar ribonucleoprotein (snoRNPs). In Danio rerio (Zebrafish), this protein is Probable ATP-dependent RNA helicase DDX20 (ddx20).